We begin with the raw amino-acid sequence, 311 residues long: Putative ribose-phosphate pyrophosphokinase 2 (311 aa).

ATP is bound by residues 38–40 and 97–98; these read DGE and RQ. Residues histidine 131 and aspartate 171 each coordinate Mg(2+). A D-ribose 5-phosphate-binding site is contributed by aspartate 219.

It belongs to the ribose-phosphate pyrophosphokinase family. Class I subfamily. In terms of assembly, homohexamer. The cofactor is Mg(2+).

The protein localises to the cytoplasm. The catalysed reaction is D-ribose 5-phosphate + ATP = 5-phospho-alpha-D-ribose 1-diphosphate + AMP + H(+). It functions in the pathway metabolic intermediate biosynthesis; 5-phospho-alpha-D-ribose 1-diphosphate biosynthesis; 5-phospho-alpha-D-ribose 1-diphosphate from D-ribose 5-phosphate (route I): step 1/1. In terms of biological role, involved in the biosynthesis of the central metabolite phospho-alpha-D-ribosyl-1-pyrophosphate (PRPP) via the transfer of pyrophosphoryl group from ATP to 1-hydroxyl of ribose-5-phosphate (Rib-5-P). This Listeria monocytogenes serotype 4b (strain F2365) protein is Putative ribose-phosphate pyrophosphokinase 2.